We begin with the raw amino-acid sequence, 871 residues long: DNA mismatch repair protein MutS 1 (871 aa).

614–621 (GPNMSGKS) contributes to the ATP binding site.

Belongs to the DNA mismatch repair MutS family.

In terms of biological role, this protein is involved in the repair of mismatches in DNA. It is possible that it carries out the mismatch recognition step. This protein has a weak ATPase activity. This chain is DNA mismatch repair protein MutS 1, found in Halobacterium salinarum (strain ATCC 29341 / DSM 671 / R1).